Reading from the N-terminus, the 233-residue chain is UPF0725 protein At4g17990 (233 aa).

It belongs to the UPF0725 (EMB2204) family.

The sequence is that of UPF0725 protein At4g17990 from Arabidopsis thaliana (Mouse-ear cress).